We begin with the raw amino-acid sequence, 292 residues long: Ribosomal protein L11 methyltransferase (292 aa).

The S-adenosyl-L-methionine site is built by Thr144, Gly165, Asp187, and Asn229.

Belongs to the methyltransferase superfamily. PrmA family.

The protein resides in the cytoplasm. The catalysed reaction is L-lysyl-[protein] + 3 S-adenosyl-L-methionine = N(6),N(6),N(6)-trimethyl-L-lysyl-[protein] + 3 S-adenosyl-L-homocysteine + 3 H(+). Functionally, methylates ribosomal protein L11. This is Ribosomal protein L11 methyltransferase from Saccharophagus degradans (strain 2-40 / ATCC 43961 / DSM 17024).